The following is a 422-amino-acid chain: Acylglycerol kinase, mitochondrial (422 aa).

Residue K6 is modified to N6-acetyllysine. The segment at T15–G31 is hydrophobic. In terms of domain architecture, DAGKc spans A58–K199. Positions Q249–Q271 are disordered.

This sequence belongs to the AGK family. As to quaternary structure, component of the TIM22 complex, which core is composed of TIMM22, associated with TIMM10 (TIMM10A and/or TIMM10B), TIMM9, AGK and TIMM29. Interacts with SMIM26. It depends on Mg(2+) as a cofactor. In terms of tissue distribution, highly expressed in muscle, heart, kidney and brain.

It localises to the mitochondrion inner membrane. Its subcellular location is the mitochondrion intermembrane space. The catalysed reaction is a monoacylglycerol + ATP = a monoacyl-sn-glycero-3-phosphate + ADP + H(+). It carries out the reaction a 1,2-diacyl-sn-glycerol + ATP = a 1,2-diacyl-sn-glycero-3-phosphate + ADP + H(+). It catalyses the reaction an N-acylsphing-4-enine + ATP = an N-acylsphing-4-enine 1-phosphate + ADP + H(+). The enzyme catalyses 1-(9Z-octadecenoyl)-sn-glycerol + ATP = 1-(9Z-octadecenoyl)-sn-glycero-3-phosphate + ADP + H(+). The catalysed reaction is 1,2-di-(9Z-octadecenoyl)-sn-glycerol + ATP = 1,2-di-(9Z-octadecenoyl)-sn-glycero-3-phosphate + ADP + H(+). It carries out the reaction a 1-acyl-sn-glycerol + ATP = a 1-acyl-sn-glycero-3-phosphate + ADP + H(+). It catalyses the reaction 1-hexadecanoyl-sn-glycerol + ATP = 1-hexadecanoyl-sn-glycero-3-phosphate + ADP + H(+). The enzyme catalyses a 2-acylglycerol + ATP = a 2-acyl-sn-glycerol 3-phosphate + ADP + H(+). The catalysed reaction is 2-(5Z,8Z,11Z,14Z-eicosatetraenoyl)-glycerol + ATP = 2-(5Z,8Z,11Z,14Z-eicosatetraenoyl)-sn-glycero-3-phosphate + ADP + H(+). It carries out the reaction 1-(5Z,8Z,11Z,14Z-eicosatetraenoyl)-sn-glycerol + ATP = 1-(5Z,8Z,11Z,14Z-eicosatetraenoyl)-sn-glycero-3-phosphate + ADP + H(+). It catalyses the reaction N-(hexanoyl)sphing-4-enine + ATP = N-hexanoylsphing-4-enine 1-phosphate + ADP + H(+). Its pathway is lipid metabolism; glycerolipid metabolism. Its function is as follows. Lipid kinase that can phosphorylate both monoacylglycerol and diacylglycerol to form lysophosphatidic acid (LPA) and phosphatidic acid (PA), respectively. Does not phosphorylate sphingosine. Phosphorylates ceramide. Phosphorylates 1,2-dioleoylglycerol more rapidly than 2,3-dioleoylglycerol. Independently of its lipid kinase activity, acts as a component of the TIM22 complex. The TIM22 complex mediates the import and insertion of multi-pass transmembrane proteins into the mitochondrial inner membrane by forming a twin-pore translocase that uses the membrane potential as the external driving force. In the TIM22 complex, required for the import of a subset of metabolite carriers into mitochondria, such as ANT1/SLC25A4 and SLC25A24, while it is not required for the import of TIMM23. Overexpression increases the formation and secretion of LPA, resulting in transactivation of EGFR and activation of the downstream MAPK signaling pathway, leading to increased cell growth. The sequence is that of Acylglycerol kinase, mitochondrial from Homo sapiens (Human).